The chain runs to 396 residues: MSCSVAVCNSPVFSPSSSLFCNKSSILSSPQESLSLTLSHRKPQTSSPSSPSTTVSSPKSPFRLRFQKPPSGFAPGPLSFGSESVSASSPPGGVLKRKRPTRLDIPIGVAGFVAPISSSAAVAATPREECREVEREGDGYSVYCKRGRREAMEDRFSAITNLHGDRKQAIFGVYDGHGGVKAAEFAAKNLDKNIVEEVVGKRDESEIAEAVKHGYLATDASFLKEEDVKGGSCCVTALVNEGNLVVSNAGDCRAVMSVGGVAKALSSDHRPSRDDERKRIETTGGYVDTFHGVWRIQGSLAVSRGIGDAQLKKWVIAEPETKISRIEHDHEFLILASDGLWDKVSNQEAVDIARPLCLGTEKPLLLAACKKLVDLSASRGSSDDISVMLIPLRQFI.

The tract at residues 32–98 (ESLSLTLSHR…SPPGGVLKRK (67 aa)) is disordered. The segment covering 44 to 61 (QTSSPSSPSTTVSSPKSP) has biased composition (low complexity). The 254-residue stretch at 139–392 (GYSVYCKRGR…DDISVMLIPL (254 aa)) folds into the PPM-type phosphatase domain. Mn(2+) is bound by residues Asp-175, Gly-176, Asp-338, and Asp-383.

It belongs to the PP2C family. As to quaternary structure, interacts with MPK4 and MPK6. The cofactor is Mg(2+). It depends on Mn(2+) as a cofactor.

It localises to the cytoplasm. The protein resides in the nucleus. It catalyses the reaction O-phospho-L-seryl-[protein] + H2O = L-seryl-[protein] + phosphate. The enzyme catalyses O-phospho-L-threonyl-[protein] + H2O = L-threonyl-[protein] + phosphate. Its function is as follows. Protein phosphatase that negatively regulates defense respones. Inactivates MPK4 and MPK6 MAP kinases involved in stress and defense signaling. This Arabidopsis thaliana (Mouse-ear cress) protein is Probable protein phosphatase 2C 25.